Consider the following 205-residue polypeptide: Anaerobic dimethyl sulfoxide reductase chain B (205 aa).

4Fe-4S ferredoxin-type domains lie at 5–33, 59–89, and 90–119; these read YGFF…LTPE, FAYY…KRED, and GFVV…YNET. 16 residues coordinate [4Fe-4S] cluster: Cys14, Cys17, Cys20, Cys24, Cys67, Cys70, Cys75, Cys79, Cys99, Cys102, Cys105, Cys109, Cys126, Cys129, Cys141, and Cys145. The interval 184-205 is disordered; that stretch reads KPNANSRPTGDTTGYLANPKEV. The segment covering 186–195 has biased composition (polar residues); that stretch reads NANSRPTGDT.

In terms of assembly, heterotrimeric enzyme composed of a catalytic heterodimer (DmsAB) and a membrane anchor protein (DmsC). The cofactor is [4Fe-4S] cluster.

In terms of biological role, electron transfer subunit of the terminal reductase during anaerobic growth on various sulfoxide and N-oxide compounds. The chain is Anaerobic dimethyl sulfoxide reductase chain B (dmsB) from Shigella flexneri.